We begin with the raw amino-acid sequence, 291 residues long: Verruculogen synthase (291 aa).

Belongs to the PhyH family. As to quaternary structure, homodimer. The cofactor is Fe cation.

It catalyses the reaction fumitremorgin B + 2-oxoglutarate + AH2 + 2 O2 = verruculogen + succinate + A + CO2 + H2O. The protein operates within mycotoxin biosynthesis. Its function is as follows. Verruculogen synthase; part of the gene cluster that mediates the biosynthesis of fumitremorgins, indole alkaloids that carry not only intriguing chemical structures, but also interesting biological and pharmacological activities. The biosynthesis of fumitremorgin-type alkaloids begins by condensation of the two amino acids L-tryptophan and L-proline to brevianamide F, catalyzed by the non-ribosomal peptide synthetase ftmPS/ftmA. Brevianamide F is then prenylated by the prenyltransferase ftmPT1/ftmB in the presence of dimethylallyl diphosphate, resulting in the formation of tryprostatin B. The three cytochrome P450 monooxygenases, ftmP450-1/ftmC, ftmP450-2/ftmE and ftmP450-3/FtmG, are responsible for the conversion of tryprostatin B to 6-hydroxytryprostatin B, tryprostatin A to fumitremorgin C and fumitremorgin C to 12,13-dihydroxyfumitremorgin C, respectively. The putative methyltransferase ftmMT/ftmD is expected for the conversion of 6-hydroxytryprostatin B to tryprostatin A. FtmPT2/FtmH catalyzes the prenylation of 12,13-dihydroxyfumitre-morgin C in the presence of dimethylallyl diphosphate, resulting in the formation of fumitremorgin B. Fumitremorgin B is further converted to verruculogen by ftmOx1/ftmF via the insertion of an endoperoxide bond between the two prenyl moieties. Finally, verruculogen is further converted to fumitremorgin A by the verruculogen prenyltransferase ftmPT3. In Neosartorya fischeri (strain ATCC 1020 / DSM 3700 / CBS 544.65 / FGSC A1164 / JCM 1740 / NRRL 181 / WB 181) (Aspergillus fischerianus), this protein is Verruculogen synthase.